Consider the following 401-residue polypeptide: Chorismate synthase (401 aa).

Residues Arg40 and Arg46 each coordinate NADP(+). FMN is bound by residues Arg135–Ser137, Gln256–Ala257, Gly300, Lys315–Thr319, and Arg341.

Belongs to the chorismate synthase family. Homotetramer. The cofactor is FMNH2.

It carries out the reaction 5-O-(1-carboxyvinyl)-3-phosphoshikimate = chorismate + phosphate. Its pathway is metabolic intermediate biosynthesis; chorismate biosynthesis; chorismate from D-erythrose 4-phosphate and phosphoenolpyruvate: step 7/7. In terms of biological role, catalyzes the anti-1,4-elimination of the C-3 phosphate and the C-6 proR hydrogen from 5-enolpyruvylshikimate-3-phosphate (EPSP) to yield chorismate, which is the branch point compound that serves as the starting substrate for the three terminal pathways of aromatic amino acid biosynthesis. This reaction introduces a second double bond into the aromatic ring system. In Mycobacterium avium (strain 104), this protein is Chorismate synthase.